The primary structure comprises 241 residues: Triosephosphate isomerase (241 aa).

Residue 9–11 coordinates substrate; it reads NWK. Histidine 96 (electrophile) is an active-site residue. Glutamate 165 acts as the Proton acceptor in catalysis. Substrate is bound by residues glycine 171, serine 204, and 225 to 226; that span reads GG.

This sequence belongs to the triosephosphate isomerase family. As to quaternary structure, homodimer.

It localises to the cytoplasm. It carries out the reaction D-glyceraldehyde 3-phosphate = dihydroxyacetone phosphate. It participates in carbohydrate biosynthesis; gluconeogenesis. The protein operates within carbohydrate degradation; glycolysis; D-glyceraldehyde 3-phosphate from glycerone phosphate: step 1/1. In terms of biological role, involved in the gluconeogenesis. Catalyzes stereospecifically the conversion of dihydroxyacetone phosphate (DHAP) to D-glyceraldehyde-3-phosphate (G3P). This chain is Triosephosphate isomerase, found in Prochlorococcus marinus (strain MIT 9515).